A 461-amino-acid chain; its full sequence is D-phenylhydantoinase (461 aa).

Residues His-59, His-61, and Lys-151 each coordinate a divalent metal cation. Lys-151 carries the post-translational modification N6-carboxylysine. Tyr-156 serves as a coordination point for substrate. Positions 182 and 239 each coordinate a divalent metal cation. Ser-286 provides a ligand contact to substrate. Residue Asp-313 participates in a divalent metal cation binding. Residue Asn-335 participates in substrate binding.

This sequence belongs to the metallo-dependent hydrolases superfamily. Hydantoinase/dihydropyrimidinase family. As to quaternary structure, homotetramer. A divalent metal cation serves as cofactor. Carboxylation allows a single lysine to coordinate two divalent metal cations.

The enzyme catalyses D-5-phenylhydantoin + H2O = N-carbamoyl-D-phenylglycine + H(+). In terms of biological role, catalyzes the stereospecific hydrolysis of the cyclic amide bond of D-hydantoin derivatives with an aromatic side chains at the 5'-position. Has no activity on dihydropyrimidines. The physiological function is unknown. The polypeptide is D-phenylhydantoinase (Shigella boydii serotype 4 (strain Sb227)).